Here is a 350-residue protein sequence, read N- to C-terminus: Streptomycin biosynthesis operon possible regulatory protein (350 aa).

Over residues M1–E10 the composition is skewed to polar residues. 3 disordered regions span residues M1–T20, A168–T189, and A211–D258. Composition is skewed to basic and acidic residues over residues I177–T189 and D223–Q242.

This chain is Streptomycin biosynthesis operon possible regulatory protein (strR), found in Streptomyces griseus.